Here is a 364-residue protein sequence, read N- to C-terminus: GDP-perosamine synthase (364 aa).

The residue at position 183 (lysine 183) is an N6-(pyridoxal phosphate)lysine.

Belongs to the DegT/DnrJ/EryC1 family. Homodecamer. Requires pyridoxal 5'-phosphate as cofactor.

The catalysed reaction is GDP-alpha-D-perosamine + 2-oxoglutarate = GDP-4-dehydro-alpha-D-rhamnose + L-glutamate. It functions in the pathway bacterial outer membrane biogenesis; LPS O-antigen biosynthesis. With respect to regulation, divalent ions have no significant effect on activity. In terms of biological role, catalyzes the synthesis of GDP-perosamine from GDP-4-keto-6-deoxy-D-mannose and L-glutamate. Can use only L-glutamate as amino donor. This Escherichia coli O157:H7 protein is GDP-perosamine synthase.